We begin with the raw amino-acid sequence, 345 residues long: tRNA N6-adenosine threonylcarbamoyltransferase (345 aa).

H111 and H115 together coordinate Fe cation. Residues 136 to 140, D169, G182, and N279 contribute to the substrate site; that span reads LVSGG. Residue D307 participates in Fe cation binding.

This sequence belongs to the KAE1 / TsaD family. It depends on Fe(2+) as a cofactor.

It localises to the cytoplasm. It carries out the reaction L-threonylcarbamoyladenylate + adenosine(37) in tRNA = N(6)-L-threonylcarbamoyladenosine(37) in tRNA + AMP + H(+). Functionally, required for the formation of a threonylcarbamoyl group on adenosine at position 37 (t(6)A37) in tRNAs that read codons beginning with adenine. Is involved in the transfer of the threonylcarbamoyl moiety of threonylcarbamoyl-AMP (TC-AMP) to the N6 group of A37, together with TsaE and TsaB. TsaD likely plays a direct catalytic role in this reaction. The polypeptide is tRNA N6-adenosine threonylcarbamoyltransferase (Actinobacillus succinogenes (strain ATCC 55618 / DSM 22257 / CCUG 43843 / 130Z)).